Reading from the N-terminus, the 466-residue chain is Asparagine--tRNA ligase (466 aa).

This sequence belongs to the class-II aminoacyl-tRNA synthetase family. As to quaternary structure, homodimer.

It localises to the cytoplasm. The catalysed reaction is tRNA(Asn) + L-asparagine + ATP = L-asparaginyl-tRNA(Asn) + AMP + diphosphate + H(+). This is Asparagine--tRNA ligase from Salmonella typhimurium (strain LT2 / SGSC1412 / ATCC 700720).